Reading from the N-terminus, the 90-residue chain is Acylphosphatase (90 aa).

Positions 3–90 (QYHMIADGRV…KGYRTFSISY (88 aa)) constitute an Acylphosphatase-like domain. Catalysis depends on residues Arg18 and Asn36.

It belongs to the acylphosphatase family.

It carries out the reaction an acyl phosphate + H2O = a carboxylate + phosphate + H(+). The sequence is that of Acylphosphatase (acyP) from Bacillus velezensis (strain DSM 23117 / BGSC 10A6 / LMG 26770 / FZB42) (Bacillus amyloliquefaciens subsp. plantarum).